The chain runs to 132 residues: Ribosome-binding factor A (132 aa).

The segment at 113–132 is disordered; the sequence is EANSTRAKDDDEADTPAKDD.

Belongs to the RbfA family. In terms of assembly, monomer. Binds 30S ribosomal subunits, but not 50S ribosomal subunits or 70S ribosomes.

Its subcellular location is the cytoplasm. Its function is as follows. One of several proteins that assist in the late maturation steps of the functional core of the 30S ribosomal subunit. Associates with free 30S ribosomal subunits (but not with 30S subunits that are part of 70S ribosomes or polysomes). Required for efficient processing of 16S rRNA. May interact with the 5'-terminal helix region of 16S rRNA. The chain is Ribosome-binding factor A from Burkholderia cenocepacia (strain HI2424).